Here is a 496-residue protein sequence, read N- to C-terminus: Galactose-1-phosphate uridylyltransferase (496 aa).

This sequence belongs to the galactose-1-phosphate uridylyltransferase type 2 family.

It localises to the cytoplasm. The catalysed reaction is alpha-D-galactose 1-phosphate + UDP-alpha-D-glucose = alpha-D-glucose 1-phosphate + UDP-alpha-D-galactose. It participates in carbohydrate metabolism; galactose metabolism. The protein is Galactose-1-phosphate uridylyltransferase of Staphylococcus saprophyticus subsp. saprophyticus (strain ATCC 15305 / DSM 20229 / NCIMB 8711 / NCTC 7292 / S-41).